A 354-amino-acid polypeptide reads, in one-letter code: Tyrosine recombinase XerH (354 aa).

The Core-binding (CB) domain occupies 48-134 (LTKGVKNIDE…AVINFFDFLD (87 aa)). Positions 163–346 (KLPEFMSKEE…DNDKLKLAAQ (184 aa)) constitute a Tyr recombinase domain. Catalysis depends on residues arginine 205, lysine 231, histidine 298, arginine 301, and histidine 324. Catalysis depends on tyrosine 333, which acts as the O-(3'-phospho-DNA)-tyrosine intermediate.

Belongs to the 'phage' integrase family. XerH subfamily.

It localises to the cytoplasm. FtsK is required for efficient recombination. Site-specific tyrosine recombinase, which acts by catalyzing the cutting and rejoining of the recombining DNA molecules. Binds to the complete atypical dif motif (difH) site and to both halves separately. This Campylobacter jejuni subsp. jejuni serotype O:2 (strain ATCC 700819 / NCTC 11168) protein is Tyrosine recombinase XerH.